The primary structure comprises 348 residues: Dihydroorotase (348 aa).

Zn(2+)-binding residues include H17 and H19. Substrate-binding positions include 19–21 and N45; that span reads HLR. Zn(2+)-binding residues include K103, H140, and H178. Residue K103 is modified to N6-carboxylysine. H140 is a substrate binding site. L223 lines the substrate pocket. D251 provides a ligand contact to Zn(2+). D251 is a catalytic residue. The substrate site is built by H255 and A267.

It belongs to the metallo-dependent hydrolases superfamily. DHOase family. Class II DHOase subfamily. Homodimer. Zn(2+) serves as cofactor.

The catalysed reaction is (S)-dihydroorotate + H2O = N-carbamoyl-L-aspartate + H(+). It participates in pyrimidine metabolism; UMP biosynthesis via de novo pathway; (S)-dihydroorotate from bicarbonate: step 3/3. In terms of biological role, catalyzes the reversible cyclization of carbamoyl aspartate to dihydroorotate. This chain is Dihydroorotase, found in Escherichia coli O139:H28 (strain E24377A / ETEC).